We begin with the raw amino-acid sequence, 380 residues long: L-lactate dehydrogenase (380 aa).

One can recognise an FMN hydroxy acid dehydrogenase domain in the interval 1 to 380; sequence MIISSPNDYR…TRDSLVGLPR (380 aa). Tyr24 is a binding site for substrate. Residues Ser106 and Gln127 each contribute to the FMN site. Tyr129 serves as a coordination point for substrate. Thr155 is an FMN binding site. Arg164 contacts substrate. Lys251 is a binding site for FMN. Residue His275 is the Proton acceptor of the active site. A substrate-binding site is contributed by Arg278. FMN is bound at residue 306 to 330; sequence DSGIRTGLDVVRMLALGAKGVLLGR.

Belongs to the FMN-dependent alpha-hydroxy acid dehydrogenase family. FMN is required as a cofactor.

The protein resides in the cell inner membrane. It carries out the reaction (S)-lactate + A = pyruvate + AH2. Functionally, catalyzes the conversion of L-lactate to pyruvate. Is coupled to the respiratory chain. The chain is L-lactate dehydrogenase from Azorhizobium caulinodans (strain ATCC 43989 / DSM 5975 / JCM 20966 / LMG 6465 / NBRC 14845 / NCIMB 13405 / ORS 571).